We begin with the raw amino-acid sequence, 85 residues long: UPF0335 protein BH15140 (85 aa).

It belongs to the UPF0335 family.

The protein is UPF0335 protein BH15140 of Bartonella henselae (strain ATCC 49882 / DSM 28221 / CCUG 30454 / Houston 1) (Rochalimaea henselae).